The primary structure comprises 159 residues: NADH-quinone oxidoreductase subunit B (159 aa).

Positions 36, 37, 102, and 132 each coordinate [4Fe-4S] cluster.

The protein belongs to the complex I 20 kDa subunit family. As to quaternary structure, NDH-1 is composed of 14 different subunits. Subunits NuoB, C, D, E, F, and G constitute the peripheral sector of the complex. It depends on [4Fe-4S] cluster as a cofactor.

Its subcellular location is the cell inner membrane. The catalysed reaction is a quinone + NADH + 5 H(+)(in) = a quinol + NAD(+) + 4 H(+)(out). NDH-1 shuttles electrons from NADH, via FMN and iron-sulfur (Fe-S) centers, to quinones in the respiratory chain. Couples the redox reaction to proton translocation (for every two electrons transferred, four hydrogen ions are translocated across the cytoplasmic membrane), and thus conserves the redox energy in a proton gradient. In Verminephrobacter eiseniae (strain EF01-2), this protein is NADH-quinone oxidoreductase subunit B.